We begin with the raw amino-acid sequence, 181 residues long: Ribonuclease HII (181 aa).

Positions 1–181 (MICGIDEVGR…SLHRKNFKLI (181 aa)) constitute an RNase H type-2 domain. A divalent metal cation-binding residues include Asp6, Glu7, and Asp98.

It belongs to the RNase HII family. Requires Mn(2+) as cofactor. It depends on Mg(2+) as a cofactor.

The protein resides in the cytoplasm. The catalysed reaction is Endonucleolytic cleavage to 5'-phosphomonoester.. Functionally, endonuclease that specifically degrades the RNA of RNA-DNA hybrids. The sequence is that of Ribonuclease HII from Borreliella burgdorferi (strain ZS7) (Borrelia burgdorferi).